The primary structure comprises 230 residues: Fibrillarin-like rRNA/tRNA 2'-O-methyltransferase (230 aa).

Residues threonine 89–threonine 90, glutamate 107–valine 108, aspartate 132–alanine 133, and aspartate 152–glutamine 155 each bind S-adenosyl-L-methionine.

The protein belongs to the methyltransferase superfamily. Fibrillarin family. In terms of assembly, interacts with nop5. Component of box C/D small ribonucleoprotein (sRNP) particles that contain rpl7ae, FlpA and nop5, plus a guide RNA.

In terms of biological role, involved in pre-rRNA and tRNA processing. Utilizes the methyl donor S-adenosyl-L-methionine to catalyze the site-specific 2'-hydroxyl methylation of ribose moieties in rRNA and tRNA. Site specificity is provided by a guide RNA that base pairs with the substrate. Methylation occurs at a characteristic distance from the sequence involved in base pairing with the guide RNA. In Thermoplasma acidophilum (strain ATCC 25905 / DSM 1728 / JCM 9062 / NBRC 15155 / AMRC-C165), this protein is Fibrillarin-like rRNA/tRNA 2'-O-methyltransferase.